The sequence spans 221 residues: Ribosomal RNA large subunit methyltransferase E (221 aa).

S-adenosyl-L-methionine contacts are provided by glycine 72, tryptophan 74, aspartate 91, aspartate 107, and aspartate 131. Lysine 171 acts as the Proton acceptor in catalysis.

It belongs to the class I-like SAM-binding methyltransferase superfamily. RNA methyltransferase RlmE family.

The protein resides in the cytoplasm. The enzyme catalyses uridine(2552) in 23S rRNA + S-adenosyl-L-methionine = 2'-O-methyluridine(2552) in 23S rRNA + S-adenosyl-L-homocysteine + H(+). Specifically methylates the uridine in position 2552 of 23S rRNA at the 2'-O position of the ribose in the fully assembled 50S ribosomal subunit. This Zymomonas mobilis subsp. mobilis (strain ATCC 31821 / ZM4 / CP4) protein is Ribosomal RNA large subunit methyltransferase E.